Reading from the N-terminus, the 1217-residue chain is MDTYGSIKRDLKYMYDVEEVFRNTIPKTYFGIDDVEDLHVDEAGISNIHNNITLGTKKCYHLYKKGHRTQVPIYLGSLVTRESNEYEDVSYSYDNLNTIYKDAPVWEPLLNKVSKWYDEGWSVPSSKPIPYDPNYSKCLILSPDKYKKYHKVVVDVDYDAFHWSIDVNSEFMDMPNVIRAWDISTIPQFVDGFPMLKHLIDRSKKEALFYFNYRLIPYVVHNIDKDDDMWREWLSYFLHGDHFKPDRGSYDNFGSLLGHKRLEVALMYHNRIRLMPMSATALDAMNEGAKFLMKDPTYHTAVMKKYNGVLTQYGMAEPLGYNRGWGYTGVTTADSPFILSNVNGADGYTVIDREAVEEAKEIGMQYTPKLVKLQLANMTKTSSPVNLIDSLIGNAIISLTGFAGSEKVSTALDQFEKENFERKVPDELFTAISNVTYEMVRESFQPLERSMLDKRTRLLRLYNAGTSASSSAPPGARYIFNKKMIMYSTFLSKSIDVTDEYAPMSFITSLNFNNKTANILTHPQNYYMYDWHDNHNRIINSGSREVRGGRATRIITPDPPSNYMLLILGALNTVRDMGSHRTGFSNLGMNEVVGSSFLDAVSHDALAPQCLATSSSRSLCAQALDYSTWDRQQGGRIAEAKAHGIMRVANELFPNTNTNLSDVHNLLELPMSSILYLWSESIKSSYKYKIDHSTVAVDAVRSGELTTQFSNHVTNLAALRQYHETYNRTKVPQGFRPIEVAQINIVGDDVNVILRTADRKPFTLRDMEGYHNHTFEKAAEYEFSISKKRSMMSNVATEHIKQYFKMGDILLDVMLSSMTSERNTFREQGYMNGINLLYDIAVTIMARYAQNDKLFEDMMANLPFMEGVVYRHGSQKYHFHPSPCHLLGSGSPEILPSAIDLRTFARVITVLGDYESDLYEAMSSLNATLLSTSGTTQFESQVRKHLSEELGDNIISPVWSEVFYRDEVGYEMVTKHNKLTPEGHREYLVDRIISTLSNREKLIMNNADIIEKLLSGKLKKVKRYFQEIKFKMSNMPITGLPDRKIEGVSELSSPYRAADVGMRRVHKCIGLSRRNLKFPSVTERLSRLLKSYGLVTQADSAKILSAAAGLGRSSTRYRNLGTDLGLSDMHASSFAQRLPALLTQYEIENASGSFTFYDTVSRTYDVSEASMNERVGDVSNNPIARANSSTSTYYRFRGMLHCLYGARFGLSLHASVE.

It belongs to the reoviridae RNA-directed RNA polymerase family.

Its subcellular location is the virion. The catalysed reaction is RNA(n) + a ribonucleoside 5'-triphosphate = RNA(n+1) + diphosphate. In terms of biological role, RNA-directed RNA polymerase that is involved in transcription and genome replication. Following infection, it catalyzes the synthesis of fully conservative plus strands. After core assembly, which consists in recruitment of one capped plus-strand for each genomic segments and polymerase complexes, the polymerase switches mode and catalyzes the synthesis of complementary minus-strands. This chain is RNA-directed RNA polymerase, found in Eriocheir sinensis (Chinese mitten crab).